Here is a 237-residue protein sequence, read N- to C-terminus: Leucyl/phenylalanyl-tRNA--protein transferase (237 aa).

This sequence belongs to the L/F-transferase family.

The protein localises to the cytoplasm. It catalyses the reaction N-terminal L-lysyl-[protein] + L-leucyl-tRNA(Leu) = N-terminal L-leucyl-L-lysyl-[protein] + tRNA(Leu) + H(+). The enzyme catalyses N-terminal L-arginyl-[protein] + L-leucyl-tRNA(Leu) = N-terminal L-leucyl-L-arginyl-[protein] + tRNA(Leu) + H(+). The catalysed reaction is L-phenylalanyl-tRNA(Phe) + an N-terminal L-alpha-aminoacyl-[protein] = an N-terminal L-phenylalanyl-L-alpha-aminoacyl-[protein] + tRNA(Phe). Functionally, functions in the N-end rule pathway of protein degradation where it conjugates Leu, Phe and, less efficiently, Met from aminoacyl-tRNAs to the N-termini of proteins containing an N-terminal arginine or lysine. This chain is Leucyl/phenylalanyl-tRNA--protein transferase, found in Shewanella baltica (strain OS195).